We begin with the raw amino-acid sequence, 79 residues long: Ferredoxin oxidoreductase 1 subunit ForD (79 aa).

4Fe-4S ferredoxin-type domains follow at residues 3–35 and 37–65; these read YVAQVIKDECSKYNCKQCTLFCPEPNTLMYTDE and HHAYVNTLRCKGCALCVYVCSELLKRDSI. [4Fe-4S] cluster contacts are provided by cysteine 12, cysteine 17, cysteine 20, cysteine 24, cysteine 46, cysteine 49, cysteine 52, and cysteine 56.

As to quaternary structure, heterotetramer of one alpha, one beta, one delta and one gamma chain. [4Fe-4S] cluster is required as a cofactor.

The chain is Ferredoxin oxidoreductase 1 subunit ForD (forD1) from Aquifex aeolicus (strain VF5).